The chain runs to 77 residues: Conotoxin Vc6b (77 aa).

The first 22 residues, 1–22 (MKLTCMMIVAVLFLTANTFVTA), serve as a signal peptide directing secretion. A propeptide spanning residues 23–47 (DDSGNGMENLFPKAGHEMENLEASN) is cleaved from the precursor. Intrachain disulfides connect cysteine 52–cysteine 66, cysteine 59–cysteine 72, and cysteine 67–cysteine 76.

Expressed by the venom duct.

The protein localises to the secreted. In Conus victoriae (Queen Victoria cone), this protein is Conotoxin Vc6b.